The following is a 414-amino-acid chain: Serine/threonine transporter SstT (414 aa).

Over 2–15 (TTQRSPGLFRRLAH) the chain is Cytoplasmic. The helical transmembrane segment at 16 to 36 (GSLVKQILVGLVLGILLAWIS) threads the bilayer. Topologically, residues 37 to 45 (KPAAEAVGL) are periplasmic. The chain crosses the membrane as a helical span at residues 46 to 66 (LGTLFVGALKAVAPILVLMLV). Residues 67–83 (MASIANHQHGQKTNIRP) are Cytoplasmic-facing. The chain crosses the membrane as a helical span at residues 84 to 104 (ILFLYLLGTFSAALAAVVFSF). The Periplasmic portion of the chain corresponds to 105-142 (AFPSTLHLSSSAGDISPPSGIVEVMRGLVMSMVSNPID). The helical transmembrane segment at 143–163 (ALLKGNYIGILVWAIGLGFAL) threads the bilayer. The Cytoplasmic portion of the chain corresponds to 164-179 (RHGNETTKNLVNDMSN). The chain crosses the membrane as a helical span at residues 180–200 (AVTFMVKLVIRFAPFGIFGLV). At 201–217 (SSTLATTGFSTLWGYAQ) the chain is on the periplasmic side. A helical transmembrane segment spans residues 218-238 (LLVVLVGCMLLVALVVNPLLV). At 239–299 (WWKIRRNPFP…VSIPLGATIN (61 aa)) the chain is on the cytoplasmic side. The helical transmembrane segment at 300 to 320 (MAGAAITITVLTLAAVNTLGI) threads the bilayer. The Periplasmic portion of the chain corresponds to 321–331 (PVDLPTALLLS). Residues 332–352 (VVASLCACGASGVAGGSLLLI) form a helical membrane-spanning segment. Residues 353-414 (PLACNMFGIS…DRLANSALRN (62 aa)) lie on the Cytoplasmic side of the membrane.

The protein belongs to the dicarboxylate/amino acid:cation symporter (DAACS) (TC 2.A.23) family.

The protein localises to the cell inner membrane. The catalysed reaction is L-serine(in) + Na(+)(in) = L-serine(out) + Na(+)(out). The enzyme catalyses L-threonine(in) + Na(+)(in) = L-threonine(out) + Na(+)(out). Its function is as follows. Involved in the import of serine and threonine into the cell, with the concomitant import of sodium (symport system). The polypeptide is Serine/threonine transporter SstT (Shigella flexneri).